Here is a 447-residue protein sequence, read N- to C-terminus: Signal recognition particle 54 kDa protein (447 aa).

GTP-binding positions include 103–110 (GVQGSGKT), 185–189 (DTAGR), and 245–248 (TKMD).

Belongs to the GTP-binding SRP family. SRP54 subfamily. As to quaternary structure, part of the signal recognition particle protein translocation system, which is composed of SRP and FtsY. Archaeal SRP consists of a 7S RNA molecule of 300 nucleotides and two protein subunits: SRP54 and SRP19.

It localises to the cytoplasm. The catalysed reaction is GTP + H2O = GDP + phosphate + H(+). In terms of biological role, involved in targeting and insertion of nascent membrane proteins into the cytoplasmic membrane. Binds to the hydrophobic signal sequence of the ribosome-nascent chain (RNC) as it emerges from the ribosomes. The SRP-RNC complex is then targeted to the cytoplasmic membrane where it interacts with the SRP receptor FtsY. The sequence is that of Signal recognition particle 54 kDa protein from Saccharolobus islandicus (strain Y.G.57.14 / Yellowstone #1) (Sulfolobus islandicus).